The following is a 460-amino-acid chain: Mogroside I-E synthase (460 aa).

His25 acts as the Proton acceptor in catalysis. Residue Asp114 is the Charge relay of the active site. UDP-alpha-D-glucose contacts are provided by Ser286, Cys339, Gln341, Trp359, Asn360, Ser361, Glu364, Asp380, and Gln381.

The protein belongs to the UDP-glycosyltransferase family. Highly expressed in young fruits 15 days after anthesis (15-DAA).

It carries out the reaction mogrol + UDP-alpha-D-glucose = mogroside IE + UDP + H(+). The catalysed reaction is mogroside I-A1 + UDP-alpha-D-glucose = mogroside IIE + UDP + H(+). It catalyses the reaction mogroside II-A1 + UDP-alpha-D-glucose = mogroside IIIX + UDP + H(+). The enzyme catalyses mogroside II-A + UDP-alpha-D-glucose = mogroside III + UDP + H(+). It carries out the reaction mogroside III-A1 + UDP-alpha-D-glucose = siamenoside I + UDP + H(+). It functions in the pathway secondary metabolite biosynthesis; terpenoid biosynthesis. UDP-glycosyltransferase involved in the biosynthesis of cucurbitacin and mogroside tetracyclic triterpene natural products (e.g. siamenoside I and mogrosides IV, V and VI). Cucurbitacins have cytotoxic properties and exhibit deterrent taste as a defense barrier against herbivores. Mogrosides are nonsugar highly oxygenated compounds used as high-intensity zero-calorie sweeteners; they also possess pharmacological properties such as regulating immunity, lowering blood sugar and lipid levels, protecting the liver, and acting as antioxidants and antitumor agents. Catalyzes the C3 primary glucosylation of mogrol, mogroside I-A1, mogroside II-A1, mogroside II-A and mogroside III-A1. The protein is Mogroside I-E synthase of Siraitia grosvenorii (Monk's fruit).